The following is a 362-amino-acid chain: Chalcone synthase A (362 aa).

C168 is a catalytic residue.

Belongs to the thiolase-like superfamily. Chalcone/stilbene synthases family.

It carries out the reaction (E)-4-coumaroyl-CoA + 3 malonyl-CoA + 3 H(+) = 2',4,4',6'-tetrahydroxychalcone + 3 CO2 + 4 CoA. It participates in secondary metabolite biosynthesis; flavonoid biosynthesis. The primary product of this enzyme is 4,2',4',6'-tetrahydroxychalcone (also termed naringenin-chalcone or chalcone) which can under specific conditions spontaneously isomerize into naringenin. This is Chalcone synthase A (CHSA) from Ipomoea triloba (Trilobed morning glory).